Here is a 688-residue protein sequence, read N- to C-terminus: Putative proline--tRNA ligase YHR020W (688 aa).

Ser-149 carries the post-translational modification Phosphoserine. At Thr-170 the chain carries Phosphothreonine. The segment at 631–650 is disordered; sequence ESSAKKDDGEEFEEDDKAPS. Position 655 is a phosphoserine (Ser-655).

It belongs to the class-II aminoacyl-tRNA synthetase family.

The catalysed reaction is tRNA(Pro) + L-proline + ATP = L-prolyl-tRNA(Pro) + AMP + diphosphate. This Saccharomyces cerevisiae (strain ATCC 204508 / S288c) (Baker's yeast) protein is Putative proline--tRNA ligase YHR020W.